Reading from the N-terminus, the 78-residue chain is Acyl carrier protein (78 aa).

The Carrier domain occupies 2-77 (SDIAERVKKI…DAVKFIEKAQ (76 aa)). Ser-37 is subject to O-(pantetheine 4'-phosphoryl)serine.

The protein belongs to the acyl carrier protein (ACP) family. Post-translationally, 4'-phosphopantetheine is transferred from CoA to a specific serine of apo-ACP by AcpS. This modification is essential for activity because fatty acids are bound in thioester linkage to the sulfhydryl of the prosthetic group.

The protein localises to the cytoplasm. The protein operates within lipid metabolism; fatty acid biosynthesis. Its function is as follows. Carrier of the growing fatty acid chain in fatty acid biosynthesis. The sequence is that of Acyl carrier protein from Rhizobium etli (strain CIAT 652).